The following is a 321-amino-acid chain: Annexin B10 (321 aa).

Annexin repeat units follow at residues 15-86 (FDAS…GLMM), 87-158 (PPVE…LIVT), 171-243 (GQAK…AIVE), and 247-319 (SPAA…ALLG).

Belongs to the annexin family.

In Drosophila melanogaster (Fruit fly), this protein is Annexin B10 (AnxB10).